Reading from the N-terminus, the 179-residue chain is Large ribosomal subunit protein uL5 (179 aa).

Belongs to the universal ribosomal protein uL5 family. Part of the 50S ribosomal subunit; part of the 5S rRNA/L5/L18/L25 subcomplex. Contacts the 5S rRNA and the P site tRNA. Forms a bridge to the 30S subunit in the 70S ribosome.

This is one of the proteins that bind and probably mediate the attachment of the 5S RNA into the large ribosomal subunit, where it forms part of the central protuberance. In the 70S ribosome it contacts protein S13 of the 30S subunit (bridge B1b), connecting the 2 subunits; this bridge is implicated in subunit movement. Contacts the P site tRNA; the 5S rRNA and some of its associated proteins might help stabilize positioning of ribosome-bound tRNAs. This Pasteurella multocida (strain Pm70) protein is Large ribosomal subunit protein uL5.